Consider the following 161-residue polypeptide: uncharacterized protein (161 aa).

The segment at 72-134 adopts an RING-type zinc-finger fold; sequence CAICLDNLQN…EAQQTCPTCR (63 aa). A disordered region spans residues 140-161; that stretch reads DKEVEEEERQRNLEELHDSMYG.

This is an uncharacterized protein from Caenorhabditis elegans.